Consider the following 293-residue polypeptide: Nucleotide-binding protein Bcer98_3698 (293 aa).

14–21 is an ATP binding site; that stretch reads GMSGAGKT. 65 to 68 lines the GTP pocket; that stretch reads DLRG.

This sequence belongs to the RapZ-like family.

Displays ATPase and GTPase activities. The protein is Nucleotide-binding protein Bcer98_3698 of Bacillus cytotoxicus (strain DSM 22905 / CIP 110041 / 391-98 / NVH 391-98).